The chain runs to 188 residues: Elongation factor P (188 aa).

N6-(3,6-diaminohexanoyl)-5-hydroxylysine is present on Lys34.

It belongs to the elongation factor P family. May be beta-lysylated on the epsilon-amino group of Lys-34 by the combined action of EpmA and EpmB, and then hydroxylated on the C5 position of the same residue by EpmC (if this protein is present). Lysylation is critical for the stimulatory effect of EF-P on peptide-bond formation. The lysylation moiety may extend toward the peptidyltransferase center and stabilize the terminal 3-CCA end of the tRNA. Hydroxylation of the C5 position on Lys-34 may allow additional potential stabilizing hydrogen-bond interactions with the P-tRNA.

Its subcellular location is the cytoplasm. Its pathway is protein biosynthesis; polypeptide chain elongation. Functionally, involved in peptide bond synthesis. Alleviates ribosome stalling that occurs when 3 or more consecutive Pro residues or the sequence PPG is present in a protein, possibly by augmenting the peptidyl transferase activity of the ribosome. Modification of Lys-34 is required for alleviation. This chain is Elongation factor P, found in Pasteurella multocida (strain Pm70).